Consider the following 331-residue polypeptide: Protein C10 (331 aa).

This sequence belongs to the poxviridae C4/C10 protein family.

The protein is Protein C10 of Vaccinia virus (strain Western Reserve) (VACV).